An 82-amino-acid polypeptide reads, in one-letter code: Small ribosomal subunit protein eS21 (82 aa).

The protein belongs to the eukaryotic ribosomal protein eS21 family.

The sequence is that of Small ribosomal subunit protein eS21 (RPS21) from Cyanophora paradoxa.